The chain runs to 141 residues: Cholinesterase (141 aa).

An N-linked (GlcNAc...) asparagine glycan is attached at Asn-39. 49-50 serves as a coordination point for substrate; sequence GG. Ser-131 functions as the Acyl-ester intermediate in the catalytic mechanism. Ser-131 carries the post-translational modification Phosphoserine.

The protein belongs to the type-B carboxylesterase/lipase family. In terms of assembly, homotetramer; disulfide-linked. Dimer of dimers. Present in most cells except erythrocytes.

The protein localises to the secreted. It carries out the reaction an acylcholine + H2O = a carboxylate + choline + H(+). Esterase with broad substrate specificity. Contributes to the inactivation of the neurotransmitter acetylcholine. Can degrade neurotoxic organophosphate esters. In Macaca mulatta (Rhesus macaque), this protein is Cholinesterase (BCHE).